Here is a 205-residue protein sequence, read N- to C-terminus: Nitrophorin-4 (205 aa).

Residues Met-1 to Gly-21 form the signal peptide. 2 disulfide bridges follow: Cys-23/Cys-143 and Cys-62/Cys-192. His-80 serves as a coordination point for heme.

This sequence belongs to the calycin superfamily. Nitrophorin family. The cofactor is heme b. In terms of tissue distribution, salivary gland (at protein level).

The protein localises to the secreted. The enzyme catalyses 3 nitrite + 2 H(+) = 2 nitric oxide + nitrate + H2O. Heme-based protein that delivers nitric oxide gas (NO) to the victim while feeding, resulting in vasodilation and inhibition of platelet aggregation. Reversibly binds nitric oxide (NO). Also binds tightly to histamine, which is released by the host to induce wound healing. NO release is pH dependent and linked to loop dynamics. The protein is Nitrophorin-4 of Rhodnius prolixus (Triatomid bug).